A 253-amino-acid chain; its full sequence is Type III pantothenate kinase (253 aa).

Residue 6-13 (DVGNTNTV) coordinates ATP. Position 103–106 (103–106 (GADR)) interacts with substrate. The Proton acceptor role is filled by Asp-105. Asp-125 provides a ligand contact to K(+). Position 128 (Thr-128) interacts with ATP. Residue Thr-180 coordinates substrate.

This sequence belongs to the type III pantothenate kinase family. In terms of assembly, homodimer. Requires NH4(+) as cofactor. K(+) serves as cofactor.

It localises to the cytoplasm. The catalysed reaction is (R)-pantothenate + ATP = (R)-4'-phosphopantothenate + ADP + H(+). It functions in the pathway cofactor biosynthesis; coenzyme A biosynthesis; CoA from (R)-pantothenate: step 1/5. Catalyzes the phosphorylation of pantothenate (Pan), the first step in CoA biosynthesis. The chain is Type III pantothenate kinase from Parafrankia sp. (strain EAN1pec).